Consider the following 759-residue polypeptide: Phosphoribosylformylglycinamidine synthase subunit PurL (759 aa).

H48 is an active-site residue. Residues Y51 and K91 each coordinate ATP. A Mg(2+)-binding site is contributed by E93. Residues 94–97 (SHNH) and R116 contribute to the substrate site. H95 serves as the catalytic Proton acceptor. D117 provides a ligand contact to Mg(2+). Q240 is a substrate binding site. D268 is a binding site for Mg(2+). Residue 317–319 (ESQ) participates in substrate binding. 2 residues coordinate ATP: N501 and G538. Mg(2+) is bound at residue N539. Position 541 (S541) interacts with substrate.

The protein belongs to the FGAMS family. Monomer. Part of the FGAM synthase complex composed of 1 PurL, 1 PurQ and 2 PurS subunits.

Its subcellular location is the cytoplasm. It carries out the reaction N(2)-formyl-N(1)-(5-phospho-beta-D-ribosyl)glycinamide + L-glutamine + ATP + H2O = 2-formamido-N(1)-(5-O-phospho-beta-D-ribosyl)acetamidine + L-glutamate + ADP + phosphate + H(+). It functions in the pathway purine metabolism; IMP biosynthesis via de novo pathway; 5-amino-1-(5-phospho-D-ribosyl)imidazole from N(2)-formyl-N(1)-(5-phospho-D-ribosyl)glycinamide: step 1/2. Functionally, part of the phosphoribosylformylglycinamidine synthase complex involved in the purines biosynthetic pathway. Catalyzes the ATP-dependent conversion of formylglycinamide ribonucleotide (FGAR) and glutamine to yield formylglycinamidine ribonucleotide (FGAM) and glutamate. The FGAM synthase complex is composed of three subunits. PurQ produces an ammonia molecule by converting glutamine to glutamate. PurL transfers the ammonia molecule to FGAR to form FGAM in an ATP-dependent manner. PurS interacts with PurQ and PurL and is thought to assist in the transfer of the ammonia molecule from PurQ to PurL. This chain is Phosphoribosylformylglycinamidine synthase subunit PurL, found in Chlorobaculum tepidum (strain ATCC 49652 / DSM 12025 / NBRC 103806 / TLS) (Chlorobium tepidum).